The following is a 335-amino-acid chain: Acetyl-coenzyme A carboxylase carboxyl transferase subunit alpha (335 aa).

One can recognise a CoA carboxyltransferase C-terminal domain in the interval 40–294; that stretch reads QLETLATRRR…KASIERHLSE (255 aa).

The protein belongs to the AccA family. As to quaternary structure, acetyl-CoA carboxylase is a heterohexamer composed of biotin carboxyl carrier protein (AccB), biotin carboxylase (AccC) and two subunits each of ACCase subunit alpha (AccA) and ACCase subunit beta (AccD).

Its subcellular location is the cytoplasm. The enzyme catalyses N(6)-carboxybiotinyl-L-lysyl-[protein] + acetyl-CoA = N(6)-biotinyl-L-lysyl-[protein] + malonyl-CoA. It participates in lipid metabolism; malonyl-CoA biosynthesis; malonyl-CoA from acetyl-CoA: step 1/1. Component of the acetyl coenzyme A carboxylase (ACC) complex. First, biotin carboxylase catalyzes the carboxylation of biotin on its carrier protein (BCCP) and then the CO(2) group is transferred by the carboxyltransferase to acetyl-CoA to form malonyl-CoA. This chain is Acetyl-coenzyme A carboxylase carboxyl transferase subunit alpha, found in Prochlorococcus marinus (strain MIT 9515).